The following is an 80-amino-acid chain: MADTGDMEHIFKRFDTNGDGKISLAELTDALRTLGSTSADEVQRMMAEIDTDGDGFIDFDEFISFCNANPGLMKDVAKVF.

EF-hand domains are found at residues 2 to 37 (ADTG…LGST) and 40 to 72 (DEVQ…NPGL). 9 residues coordinate Ca(2+): aspartate 15, asparagine 17, aspartate 19, lysine 21, glutamate 26, aspartate 50, aspartate 52, aspartate 54, and glutamate 61.

This chain is Polcalcin Cyn d 7, found in Cynodon dactylon (Bermuda grass).